Here is a 745-residue protein sequence, read N- to C-terminus: Probable copper-transporting ATPase PacS (745 aa).

The Cytoplasmic segment spans residues 1 to 94 (MAQTINLQLE…PVFSAKLVTG (94 aa)). One can recognise an HMA domain in the interval 3 to 68 (QTINLQLEGM…AVERAGYHAR (66 aa)). Cysteine 14 and cysteine 17 together coordinate a metal cation. The helical transmembrane segment at 95-115 (LVISAVLFFGSLPMMLGVNIP) threads the bilayer. The Extracellular segment spans residues 116–125 (HFPHIFHDPW). Residues 126-145 (LQWLLATPVQFWSGAEFYRG) traverse the membrane as a helical segment. The Cytoplasmic portion of the chain corresponds to 146–152 (AWKSVRT). The chain crosses the membrane as a helical span at residues 153-173 (RSATMDTLVALGTSAAYFYSV). Topologically, residues 174-193 (AITLFPQWLTSQGLAAHVYF) are extracellular. The helical transmembrane segment at 194–214 (EAAAVVITLILLGRSLEQRAR) threads the bilayer. The Cytoplasmic segment spans residues 215–342 (RETSAAIRKL…KAPIQHFVDR (128 aa)). A helical membrane pass occupies residues 343 to 365 (ITHWFVPTVIVVAIAAFCIWWLT). The Extracellular segment spans residues 366–372 (TGNITLA). Residues 373–390 (VLTLVEVLIIACPCALGL) traverse the membrane as a helical segment. Residues 391–543 (ATPTSVMVGT…QAQQWEKEQK (153 aa)) lie on the Cytoplasmic side of the membrane. Residue aspartate 428 is the 4-aspartylphosphate intermediate of the active site. A helical transmembrane segment spans residues 544-564 (TVIWLAVDTEVKALLAIADAI). At 565 to 687 (KPSSPQVVQA…KLSRATMGNI (123 aa)) the chain is on the extracellular side. Mg(2+) is bound by residues aspartate 633 and aspartate 637. The helical transmembrane segment at 688–707 (RQNLFFAFIYNVIGIPVAAG) threads the bilayer. The Cytoplasmic segment spans residues 708 to 719 (LFYPLFGLLLNP). A helical transmembrane segment spans residues 720 to 738 (ILAGAAMAFSSVSVVTNAL). The Extracellular segment spans residues 739–745 (RLKKFCP).

The protein belongs to the cation transport ATPase (P-type) (TC 3.A.3) family. Type IB subfamily.

It is found in the cell membrane. The enzyme catalyses Cu(+)(in) + ATP + H2O = Cu(+)(out) + ADP + phosphate + H(+). Its function is as follows. May play a role in the osmotic adaptation. The polypeptide is Probable copper-transporting ATPase PacS (pacS) (Synechocystis sp. (strain ATCC 27184 / PCC 6803 / Kazusa)).